A 70-amino-acid chain; its full sequence is Protein SlyX homolog (70 aa).

Belongs to the SlyX family.

This is Protein SlyX homolog from Rhizobium meliloti (strain 1021) (Ensifer meliloti).